The following is a 661-amino-acid chain: UvrABC system protein B (661 aa).

Residues 25–182 (KGLNNKKRSQ…NDLVNLQYER (158 aa)) form the Helicase ATP-binding domain. Residue 38–45 (GITGSGKT) coordinates ATP. The Beta-hairpin signature appears at 91-114 (YYDYYQPEAYIPKTDVFIEKDSSI). The Helicase C-terminal domain maps to 430–592 (QVEDLVGEIQ…IIPKTINRTI (163 aa)). A UVR domain is found at 621–656 (KAHIDKLRKEMLKAASNLEFEQAAKLRDQLKTLEEA).

Belongs to the UvrB family. In terms of assembly, forms a heterotetramer with UvrA during the search for lesions. Interacts with UvrC in an incision complex.

It is found in the cytoplasm. The UvrABC repair system catalyzes the recognition and processing of DNA lesions. A damage recognition complex composed of 2 UvrA and 2 UvrB subunits scans DNA for abnormalities. Upon binding of the UvrA(2)B(2) complex to a putative damaged site, the DNA wraps around one UvrB monomer. DNA wrap is dependent on ATP binding by UvrB and probably causes local melting of the DNA helix, facilitating insertion of UvrB beta-hairpin between the DNA strands. Then UvrB probes one DNA strand for the presence of a lesion. If a lesion is found the UvrA subunits dissociate and the UvrB-DNA preincision complex is formed. This complex is subsequently bound by UvrC and the second UvrB is released. If no lesion is found, the DNA wraps around the other UvrB subunit that will check the other stand for damage. This Rickettsia bellii (strain RML369-C) protein is UvrABC system protein B.